Reading from the N-terminus, the 146-residue chain is Globin-1 (146 aa).

One can recognise a Globin domain in the interval 9 to 146 (QLTADVKKDL…KLVAVVQAAL (138 aa)). H101 is a binding site for heme b.

This sequence belongs to the globin family. As to quaternary structure, homodimer.

The protein localises to the cytoplasm. The protein is Globin-1 of Anadara broughtonii (Blood clam).